The sequence spans 496 residues: Beta-amylase (496 aa).

3 residues coordinate substrate: Asp-54, His-94, and Asp-102. Glu-187 serves as the catalytic Proton donor. Substrate is bound by residues Lys-296, His-301, and Thr-343. Glu-381 acts as the Proton acceptor in catalysis. Residues 382-383 (NA) and Arg-421 contribute to the substrate site.

Belongs to the glycosyl hydrolase 14 family.

The enzyme catalyses Hydrolysis of (1-&gt;4)-alpha-D-glucosidic linkages in polysaccharides so as to remove successive maltose units from the non-reducing ends of the chains.. This is Beta-amylase (BMY1) from Trifolium repens (Creeping white clover).